The following is a 152-amino-acid chain: Small ribosomal subunit protein uS11 (152 aa).

This sequence belongs to the universal ribosomal protein uS11 family. In terms of assembly, component of the small ribosomal subunit. Part of the small subunit (SSU) processome, composed of more than 70 proteins and the RNA chaperone small nucleolar RNA (snoRNA) U3.

The protein resides in the cytoplasm. Its subcellular location is the nucleus. It is found in the nucleolus. Functionally, component of the small ribosomal subunit. The ribosome is a large ribonucleoprotein complex responsible for the synthesis of proteins in the cell. Part of the small subunit (SSU) processome, first precursor of the small eukaryotic ribosomal subunit. During the assembly of the SSU processome in the nucleolus, many ribosome biogenesis factors, an RNA chaperone and ribosomal proteins associate with the nascent pre-rRNA and work in concert to generate RNA folding, modifications, rearrangements and cleavage as well as targeted degradation of pre-ribosomal RNA by the RNA exosome. The protein is Small ribosomal subunit protein uS11 (rps-14) of Caenorhabditis elegans.